The following is a 375-amino-acid chain: N-acetylneuraminate epimerase (375 aa).

The signal sequence occupies residues 1-22 (MKLTKTALCTALFATFTFSANA). 7 Kelch repeats span residues 43-87 (TVYV…AAVD), 89-140 (KLYV…ASHG), 142-176 (KVYILGGSNLSIFNGFFQDNVAAGEDQAKKDEIAA), 177-222 (AYFD…TIQG), 225-273 (LVVV…LAGA), 295-344 (KQYK…SYNN), and 346-375 (VLLIGGETDGGKALTSVKAISYDGKKLTIE). Glu231 functions as the Proton acceptor in the catalytic mechanism.

It belongs to the NanM family. In terms of assembly, homodimer.

The protein resides in the periplasm. It carries out the reaction N-acetyl-alpha-neuraminate = N-acetyl-beta-neuraminate. In terms of biological role, converts alpha-N-acetylneuranimic acid (Neu5Ac) to the beta-anomer, accelerating the equilibrium between the alpha- and beta-anomers. Probably facilitates sialidase-negative bacteria to compete successfully for limited amounts of extracellular Neu5Ac, which is likely taken up in the beta-anomer. In addition, the rapid removal of sialic acid from solution might be advantageous to the bacterium to damp down host responses. This is N-acetylneuraminate epimerase from Haemophilus influenzae (strain PittEE).